The chain runs to 98 residues: NADH-ubiquinone oxidoreductase chain 4L (98 aa).

3 consecutive transmembrane segments (helical) span residues 1 to 21 (MSMV…GLLM), 29 to 49 (SLLC…VTIL), and 61 to 81 (IILL…LVMV).

The protein belongs to the complex I subunit 4L family. Core subunit of respiratory chain NADH dehydrogenase (Complex I) which is composed of 45 different subunits.

Its subcellular location is the mitochondrion inner membrane. It catalyses the reaction a ubiquinone + NADH + 5 H(+)(in) = a ubiquinol + NAD(+) + 4 H(+)(out). Its function is as follows. Core subunit of the mitochondrial membrane respiratory chain NADH dehydrogenase (Complex I) which catalyzes electron transfer from NADH through the respiratory chain, using ubiquinone as an electron acceptor. Part of the enzyme membrane arm which is embedded in the lipid bilayer and involved in proton translocation. The chain is NADH-ubiquinone oxidoreductase chain 4L (MT-ND4L) from Erignathus barbatus (Bearded seal).